The following is a 1818-amino-acid chain: Cytadherence high molecular weight protein 2 (1818 aa).

Coiled coils occupy residues 31–880 (LESA…KQRE), 919–1607 (ELKI…DNKH), 1644–1755 (HLFE…QAVQ), and 1786–1817 (LATQ…QKAA).

Post-translationally, phosphorylated mainly on serine residues.

In terms of biological role, component of the cytoskeleton-like structure which stabilizes the shape of the wall-less Mycoplasma. This cytoskeleton-like network of accessory proteins containing HMW proteins 1 to 5 allows the proper anchoring of cytadhesin proteins in the mycoplasmal membrane at the attachment organelle. The chain is Cytadherence high molecular weight protein 2 (hmw2) from Mycoplasma pneumoniae (strain ATCC 29342 / M129 / Subtype 1) (Mycoplasmoides pneumoniae).